The following is a 384-amino-acid chain: Queuine tRNA-ribosyltransferase (384 aa).

The Proton acceptor role is filled by aspartate 103. Residues 103–107 (DSGGF), aspartate 157, glutamine 200, and glycine 227 contribute to the substrate site. Residues 258-264 (GVGTYRE) are RNA binding. Aspartate 277 functions as the Nucleophile in the catalytic mechanism. Residues 282–286 (TRLAR) form an RNA binding; important for wobble base 34 recognition region. Positions 315, 317, 320, and 346 each coordinate Zn(2+).

The protein belongs to the queuine tRNA-ribosyltransferase family. Homodimer. Within each dimer, one monomer is responsible for RNA recognition and catalysis, while the other monomer binds to the replacement base PreQ1. Zn(2+) is required as a cofactor.

The catalysed reaction is 7-aminomethyl-7-carbaguanine + guanosine(34) in tRNA = 7-aminomethyl-7-carbaguanosine(34) in tRNA + guanine. It functions in the pathway tRNA modification; tRNA-queuosine biosynthesis. Its function is as follows. Catalyzes the base-exchange of a guanine (G) residue with the queuine precursor 7-aminomethyl-7-deazaguanine (PreQ1) at position 34 (anticodon wobble position) in tRNAs with GU(N) anticodons (tRNA-Asp, -Asn, -His and -Tyr). Catalysis occurs through a double-displacement mechanism. The nucleophile active site attacks the C1' of nucleotide 34 to detach the guanine base from the RNA, forming a covalent enzyme-RNA intermediate. The proton acceptor active site deprotonates the incoming PreQ1, allowing a nucleophilic attack on the C1' of the ribose to form the product. After dissociation, two additional enzymatic reactions on the tRNA convert PreQ1 to queuine (Q), resulting in the hypermodified nucleoside queuosine (7-(((4,5-cis-dihydroxy-2-cyclopenten-1-yl)amino)methyl)-7-deazaguanosine). This chain is Queuine tRNA-ribosyltransferase, found in Synechococcus elongatus (strain ATCC 33912 / PCC 7942 / FACHB-805) (Anacystis nidulans R2).